The chain runs to 361 residues: MYRPIRALIDCTALQHNLSVVRSHTRQARIMAVVKADAYGHGLLRTTQALNTADGFAVLELEAAIQLREAGFNQPVLLLEGFFSAEELEAIDHYQLSTVIHSHEQLSLLLAHRKTGKPDIYLKINTGMNRLGFRPEEESYVFNRIRQWRSDTSITLMTHFSCADDALEADQVNQQLDQFAALHDVKENNLPQTLANSAAILRYPGTHADWVRPGIVLYGASPLPDKTGIELGLRPVMTLTSQIIAVQQLDPSDRVGYGGQFIANQPMRIGVVAAGYADGYPRHAPTGTPVLVNGQRTRLVGRISMDMLTVDLNGISEAGVGSPVTLWGEGLPVEEVAKSAQTISYELLTALSPRVPSISIS.

Residue Lys-35 is the Proton acceptor; specific for D-alanine of the active site. At Lys-35 the chain carries N6-(pyridoxal phosphate)lysine. Residue Arg-130 participates in substrate binding. Tyr-257 acts as the Proton acceptor; specific for L-alanine in catalysis. Met-305 contributes to the substrate binding site.

It belongs to the alanine racemase family. Pyridoxal 5'-phosphate is required as a cofactor.

The enzyme catalyses L-alanine = D-alanine. It participates in amino-acid biosynthesis; D-alanine biosynthesis; D-alanine from L-alanine: step 1/1. Catalyzes the interconversion of L-alanine and D-alanine. May also act on other amino acids. This chain is Alanine racemase (alr), found in Nitrosomonas eutropha (strain DSM 101675 / C91 / Nm57).